Here is a 256-residue protein sequence, read N- to C-terminus: Hydroxyacylglutathione hydrolase (256 aa).

Residues histidine 57, histidine 59, aspartate 61, histidine 62, histidine 115, aspartate 134, and histidine 172 each contribute to the Zn(2+) site.

This sequence belongs to the metallo-beta-lactamase superfamily. Glyoxalase II family. In terms of assembly, monomer. Zn(2+) serves as cofactor.

It carries out the reaction an S-(2-hydroxyacyl)glutathione + H2O = a 2-hydroxy carboxylate + glutathione + H(+). It functions in the pathway secondary metabolite metabolism; methylglyoxal degradation; (R)-lactate from methylglyoxal: step 2/2. In terms of biological role, thiolesterase that catalyzes the hydrolysis of S-D-lactoyl-glutathione to form glutathione and D-lactic acid. In Rhizobium meliloti (strain 1021) (Ensifer meliloti), this protein is Hydroxyacylglutathione hydrolase.